The following is a 133-amino-acid chain: uncharacterized protein (133 aa).

The interval 107-133 (TSHHRAAGLQSQHAPGSGRVRITGGKV) is disordered.

This is an uncharacterized protein from Homo sapiens (Human).